A 417-amino-acid polypeptide reads, in one-letter code: Serine hydroxymethyltransferase (417 aa).

(6S)-5,6,7,8-tetrahydrofolate contacts are provided by residues leucine 121 and 125-127; that span reads GHL. Lysine 230 is modified (N6-(pyridoxal phosphate)lysine). A (6S)-5,6,7,8-tetrahydrofolate-binding site is contributed by 355 to 357; it reads SPF.

It belongs to the SHMT family. As to quaternary structure, homodimer. It depends on pyridoxal 5'-phosphate as a cofactor.

The protein resides in the cytoplasm. It catalyses the reaction (6R)-5,10-methylene-5,6,7,8-tetrahydrofolate + glycine + H2O = (6S)-5,6,7,8-tetrahydrofolate + L-serine. Its pathway is one-carbon metabolism; tetrahydrofolate interconversion. It participates in amino-acid biosynthesis; glycine biosynthesis; glycine from L-serine: step 1/1. In terms of biological role, catalyzes the reversible interconversion of serine and glycine with tetrahydrofolate (THF) serving as the one-carbon carrier. This reaction serves as the major source of one-carbon groups required for the biosynthesis of purines, thymidylate, methionine, and other important biomolecules. Also exhibits THF-independent aldolase activity toward beta-hydroxyamino acids, producing glycine and aldehydes, via a retro-aldol mechanism. The chain is Serine hydroxymethyltransferase from Legionella pneumophila subsp. pneumophila (strain Philadelphia 1 / ATCC 33152 / DSM 7513).